The following is a 285-amino-acid chain: Prephenate dehydratase (285 aa).

The Prephenate dehydratase domain maps to 2-183 (KVGYLGPAAT…NHTRFVILSP (182 aa)). The ACT domain occupies 204-281 (MVMLPQDDQS…CKVRLLGAYQ (78 aa)).

It carries out the reaction prephenate + H(+) = 3-phenylpyruvate + CO2 + H2O. The protein operates within amino-acid biosynthesis; L-phenylalanine biosynthesis; phenylpyruvate from prephenate: step 1/1. The protein is Prephenate dehydratase (pheA) of Bacillus subtilis (strain 168).